A 440-amino-acid polypeptide reads, in one-letter code: Peroxisome proliferator-activated receptor delta (440 aa).

The tract at residues 1–53 (MEQPQEETPEAREEEKEEVAMGDGAPELNGGPEHTLPSSSCADLSQNSSPSSL) is disordered. Polar residues predominate over residues 36–53 (LPSSSCADLSQNSSPSSL). A DNA-binding region (nuclear receptor) is located at residues 70 to 144 (NMECRVCGDK…LGMSHNAIRF (75 aa)). 2 NR C4-type zinc fingers span residues 73 to 93 (CRVCGDKASGFHYGVHACEGC) and 110 to 132 (CDRICKIQKKNRNKCQYCRFQKC). Residues 210-438 (FVIHDIETLW…HPLLQEIYKD (229 aa)) form the NR LBD domain.

Belongs to the nuclear hormone receptor family. NR1 subfamily. Heterodimer with the retinoid X receptor. Interacts (via domain NR LBD) with CRY1 and CRY2 in a ligand-dependent manner. Post-translationally, 'Lys-48'-linked polyubiquitinated; leading to proteasomal degradation. Deubiquitinated and stabilized by OTUD3. As to expression, heart, adrenal and intestine.

It localises to the nucleus. Its function is as follows. Ligand-activated transcription factor key mediator of energy metabolism in adipose tissues. Receptor that binds peroxisome proliferators such as hypolipidemic drugs and fatty acids. Has a preference for poly-unsaturated fatty acids, such as gamma-linoleic acid and eicosapentanoic acid. Once activated by a ligand, the receptor binds to promoter elements of target genes. Regulates the peroxisomal beta-oxidation pathway of fatty acids. Functions as transcription activator for the acyl-CoA oxidase gene. Decreases expression of NPC1L1 once activated by a ligand. The protein is Peroxisome proliferator-activated receptor delta (Ppard) of Mus musculus (Mouse).